The chain runs to 404 residues: Tryptophan synthase beta chain (404 aa).

Position 98 is an N6-(pyridoxal phosphate)lysine (K98).

Belongs to the TrpB family. In terms of assembly, tetramer of two alpha and two beta chains. It depends on pyridoxal 5'-phosphate as a cofactor.

The enzyme catalyses (1S,2R)-1-C-(indol-3-yl)glycerol 3-phosphate + L-serine = D-glyceraldehyde 3-phosphate + L-tryptophan + H2O. Its pathway is amino-acid biosynthesis; L-tryptophan biosynthesis; L-tryptophan from chorismate: step 5/5. Its function is as follows. The beta subunit is responsible for the synthesis of L-tryptophan from indole and L-serine. In Rhodopseudomonas palustris (strain BisA53), this protein is Tryptophan synthase beta chain.